Consider the following 336-residue polypeptide: Quinolinate synthase (336 aa).

Iminosuccinate is bound by residues histidine 25 and serine 42. Cysteine 86 is a [4Fe-4S] cluster binding site. Iminosuccinate-binding positions include 117–119 and serine 138; that span reads YIN. Position 198 (cysteine 198) interacts with [4Fe-4S] cluster. Iminosuccinate is bound by residues 224–226 and threonine 241; that span reads HPE. Position 288 (cysteine 288) interacts with [4Fe-4S] cluster.

This sequence belongs to the quinolinate synthase family. Type 3 subfamily. It depends on [4Fe-4S] cluster as a cofactor.

It localises to the cytoplasm. The enzyme catalyses iminosuccinate + dihydroxyacetone phosphate = quinolinate + phosphate + 2 H2O + H(+). Its pathway is cofactor biosynthesis; NAD(+) biosynthesis; quinolinate from iminoaspartate: step 1/1. Catalyzes the condensation of iminoaspartate with dihydroxyacetone phosphate to form quinolinate. In Helicobacter pylori (strain ATCC 700392 / 26695) (Campylobacter pylori), this protein is Quinolinate synthase.